The primary structure comprises 526 residues: ATP synthase subunit alpha 2 (526 aa).

171-178 serves as a coordination point for ATP; the sequence is GDRQTGKT.

It belongs to the ATPase alpha/beta chains family. As to quaternary structure, F-type ATPases have 2 components, CF(1) - the catalytic core - and CF(0) - the membrane proton channel. CF(1) has five subunits: alpha(3), beta(3), gamma(1), delta(1), epsilon(1). CF(0) has four main subunits: a(1), b(1), b'(1) and c(9-12).

Its subcellular location is the cell inner membrane. The enzyme catalyses ATP + H2O + 4 H(+)(in) = ADP + phosphate + 5 H(+)(out). In terms of biological role, produces ATP from ADP in the presence of a proton gradient across the membrane. The alpha chain is a regulatory subunit. In Chlorobium luteolum (strain DSM 273 / BCRC 81028 / 2530) (Pelodictyon luteolum), this protein is ATP synthase subunit alpha 2.